A 787-amino-acid chain; its full sequence is Protocadherin beta-15 (787 aa).

A signal peptide spans 1–26 (MEPAGERFPEQRQVLILLLLLEVTLA). Residues 27–690 (GWEPRRYSVM…AQADSLTVYL (664 aa)) are Extracellular-facing. Cadherin domains follow at residues 35–133 (VMEE…SPEF), 138–242 (MTLK…APEF), 247–347 (YEVQ…FPEL), 352–451 (LTSP…APAF), and 456–561 (YTLF…SPFV). N-linked (GlcNAc...) asparagine glycosylation occurs at asparagine 418. The N-linked (GlcNAc...) asparagine glycan is linked to asparagine 567. The Cadherin 6 domain occupies 568–671 (GSAPCTELVP…LVDGFSQPYL (104 aa)). Residues 691 to 711 (VVALASVSSLFLFSVFLFVAV) traverse the membrane as a helical segment. Topologically, residues 712-787 (RLCRRSRAAS…DSRRKSEFLE (76 aa)) are cytoplasmic.

It localises to the cell membrane. Its function is as follows. Potential calcium-dependent cell-adhesion protein. May be involved in the establishment and maintenance of specific neuronal connections in the brain. The protein is Protocadherin beta-15 (PCDHB15) of Homo sapiens (Human).